Here is a 523-residue protein sequence, read N- to C-terminus: Exodeoxyribonuclease 7 large subunit (523 aa).

Residues 502 to 523 (PGASPAARTRAGKAKADQGSLF) form a disordered region.

The protein belongs to the XseA family. Heterooligomer composed of large and small subunits.

The protein localises to the cytoplasm. The enzyme catalyses Exonucleolytic cleavage in either 5'- to 3'- or 3'- to 5'-direction to yield nucleoside 5'-phosphates.. In terms of biological role, bidirectionally degrades single-stranded DNA into large acid-insoluble oligonucleotides, which are then degraded further into small acid-soluble oligonucleotides. The sequence is that of Exodeoxyribonuclease 7 large subunit from Rhodospirillum centenum (strain ATCC 51521 / SW).